Reading from the N-terminus, the 467-residue chain is Uronate isomerase (467 aa).

The protein belongs to the metallo-dependent hydrolases superfamily. Uronate isomerase family.

The catalysed reaction is D-glucuronate = D-fructuronate. The enzyme catalyses aldehydo-D-galacturonate = keto-D-tagaturonate. The protein operates within carbohydrate metabolism; pentose and glucuronate interconversion. This is Uronate isomerase from Staphylococcus haemolyticus (strain JCSC1435).